The sequence spans 266 residues: Hydroxyacylglutathione hydrolase (266 aa).

Zn(2+)-binding residues include His-53, His-55, Asp-57, His-58, His-118, Asp-140, and His-178.

This sequence belongs to the metallo-beta-lactamase superfamily. Glyoxalase II family. Monomer. It depends on Zn(2+) as a cofactor.

It catalyses the reaction an S-(2-hydroxyacyl)glutathione + H2O = a 2-hydroxy carboxylate + glutathione + H(+). The protein operates within secondary metabolite metabolism; methylglyoxal degradation; (R)-lactate from methylglyoxal: step 2/2. In terms of biological role, thiolesterase that catalyzes the hydrolysis of S-D-lactoyl-glutathione to form glutathione and D-lactic acid. This is Hydroxyacylglutathione hydrolase from Cupriavidus metallidurans (strain ATCC 43123 / DSM 2839 / NBRC 102507 / CH34) (Ralstonia metallidurans).